The following is a 124-amino-acid chain: MRHYEIVFIVHPDQSEQVPAMIERYKSLVTSQGGQVHRVEDWGRRQMAYMIQKLAKAHYVCVNIECGKETLAELEHAFKFNDAVLRHLIVQTKKAETAPSPMMKEVQREEARKAAQTTTEGQAA.

Residues 96 to 124 (ETAPSPMMKEVQREEARKAAQTTTEGQAA) are disordered. Residues 115–124 (AQTTTEGQAA) show a composition bias toward polar residues.

It belongs to the bacterial ribosomal protein bS6 family.

Functionally, binds together with bS18 to 16S ribosomal RNA. The polypeptide is Small ribosomal subunit protein bS6 (Cupriavidus pinatubonensis (strain JMP 134 / LMG 1197) (Cupriavidus necator (strain JMP 134))).